The following is a 341-amino-acid chain: DnaJ homolog subfamily C member 22 (341 aa).

The TM2 domain occupies 3 to 50; that stretch reads KGLLVTYALWAVGGPAGLHHLYLGRDSHALLWMLTLGGGGLGWLWEFW. Helical transmembrane passes span 5-25, 30-50, 81-101, 105-125, 135-155, 185-205, and 218-238; these read LLVTYALWAVGGPAGLHHLYL, HALLWMLTLGGGGLGWLWEFW, FAAQVIVGIYFGLVALISLSS, FYIVALPLAVGLGVLLVAAVG, LGAAFLTSPIFYGRPIAILPI, LGLAYLAFTGPLAYSALCNTA, and FLNWFSFFPLLGRLMEFVLLL. A J domain is found at 277-341; that stretch reads LAYQVLGLSE…QPRKPRGSRR (65 aa).

It is found in the membrane. Its function is as follows. May function as a co-chaperone. In Pongo abelii (Sumatran orangutan), this protein is DnaJ homolog subfamily C member 22 (DNAJC22).